A 320-amino-acid chain; its full sequence is Coproporphyrin III ferrochelatase (320 aa).

Positions 194 and 273 each coordinate Fe(2+).

This sequence belongs to the ferrochelatase family.

It is found in the cytoplasm. The catalysed reaction is Fe-coproporphyrin III + 2 H(+) = coproporphyrin III + Fe(2+). The protein operates within porphyrin-containing compound metabolism; protoheme biosynthesis. In terms of biological role, involved in coproporphyrin-dependent heme b biosynthesis. Catalyzes the insertion of ferrous iron into coproporphyrin III to form Fe-coproporphyrin III. The sequence is that of Coproporphyrin III ferrochelatase from Symbiobacterium thermophilum (strain DSM 24528 / JCM 14929 / IAM 14863 / T).